A 420-amino-acid chain; its full sequence is Serine palmitoyltransferase (420 aa).

Residues 134–135, H234, T262, and S264 each bind pyridoxal 5'-phosphate; that span reads GY. K265 is modified (N6-(pyridoxal phosphate)lysine).

This sequence belongs to the class-II pyridoxal-phosphate-dependent aminotransferase family. In terms of assembly, homodimer. Requires pyridoxal 5'-phosphate as cofactor.

Its subcellular location is the cytoplasm. It catalyses the reaction L-serine + hexadecanoyl-CoA + H(+) = 3-oxosphinganine + CO2 + CoA. The protein operates within lipid metabolism; sphingolipid metabolism. Not inhibited by relatively high concentrations of palmitoyl-CoA. Inhibited by both D-cycloserine (DCS) and L-cycloserine (LCS), which inactivate SPT by transamination to form a free pyridoxamine 5'-phosphate (PMP) and beta-aminooxyacetaldehyde that remain bound at the active site. Inhibition is reversed by incubation with excess pyridoxal phosphate. Inhibited by the fungal natural product myriocin, which acts as a competitive inhibitor for both L-serine and palmitoyl-CoA substrates. Catalyzes the condensation of L-serine with palmitoyl-CoA (hexadecanoyl-CoA) to produce 3-oxosphinganine. Exhibits a broad substrate specificity concerning the chain length and the degree of unsaturation of acyl-CoA. This is Serine palmitoyltransferase from Sphingomonas paucimobilis (Pseudomonas paucimobilis).